We begin with the raw amino-acid sequence, 1589 residues long: Mediator of RNA polymerase II transcription subunit 23 (1589 aa).

A disordered region spans residues 1381 to 1499; sequence YVSQNEPAPP…PPTPAPMHHQ (119 aa). The segment covering 1392 to 1410 has biased composition (basic and acidic residues); that stretch reads TPEREKTPERKDQQKEQQE. Over residues 1457-1470 the composition is skewed to low complexity; it reads LHHQQQQQQHLSQM.

It belongs to the Mediator complex subunit 23 family. Component of the Mediator complex.

The protein resides in the nucleus. Functionally, component of the Mediator complex, a coactivator involved in the regulated transcription of nearly all RNA polymerase II-dependent genes. Mediator functions as a bridge to convey information from gene-specific regulatory proteins to the basal RNA polymerase II transcription machinery. Mediator is recruited to promoters by direct interactions with regulatory proteins and serves as a scaffold for the assembly of a functional preinitiation complex with RNA polymerase II and the general transcription factors. The sequence is that of Mediator of RNA polymerase II transcription subunit 23 (sur-2) from Caenorhabditis briggsae.